Reading from the N-terminus, the 80-residue chain is Large ribosomal subunit protein bL31B (80 aa).

Belongs to the bacterial ribosomal protein bL31 family. Type B subfamily. In terms of assembly, part of the 50S ribosomal subunit.

This chain is Large ribosomal subunit protein bL31B, found in Streptococcus sanguinis (strain SK36).